Reading from the N-terminus, the 210-residue chain is Riboflavin kinase (210 aa).

The interval 1–81 (MECRERRLAA…DLLRYFNIAS (81 aa)) is H-T-H motif-like. Residues 82–210 (IRLVGRVVSG…GDVVEVEVLL (129 aa)) form a riboflavin kinase region. Residue 91–96 (GLGEGA) coordinates CDP. Residues threonine 120 and asparagine 122 each contribute to the Mg(2+) site. The FMN site is built by threonine 177 and glutamate 185. 190–193 (VKLR) is a binding site for CDP.

It belongs to the archaeal riboflavin kinase family. Mg(2+) is required as a cofactor.

The catalysed reaction is riboflavin + CTP = CDP + FMN + H(+). It participates in cofactor biosynthesis; FMN biosynthesis; FMN from riboflavin (CTP route): step 1/1. Its function is as follows. Catalyzes the CTP-dependent phosphorylation of riboflavin (vitamin B2) to form flavin mononucleotide (FMN). This chain is Riboflavin kinase (ribK), found in Pyrobaculum arsenaticum (strain DSM 13514 / JCM 11321 / PZ6).